Reading from the N-terminus, the 162-residue chain is Nucleotide-binding protein SCO4614 (162 aa).

This sequence belongs to the YajQ family.

It is found in the cytoplasm. It localises to the nucleoid. Nucleotide-binding protein. The protein is Nucleotide-binding protein SCO4614 of Streptomyces coelicolor (strain ATCC BAA-471 / A3(2) / M145).